We begin with the raw amino-acid sequence, 235 residues long: Exosome complex component Rrp4 (235 aa).

Positions 67 to 139 (GDVVIGLIQS…KTRSPLLTVQ (73 aa)) constitute an S1 motif domain. The region spanning 149 to 205 (GKIVEISPAKVPRVIGRKMSMLKTLEEKTECKIFVARNGRIHLECPNEDLEAIAVMA) is the KH domain.

Belongs to the RRP4 family. Component of the archaeal exosome complex. Forms a trimer of Rrp4 and/or Csl4 subunits. The trimer associates with a hexameric ring-like arrangement composed of 3 Rrp41-Rrp42 heterodimers.

Its subcellular location is the cytoplasm. Functionally, non-catalytic component of the exosome, which is a complex involved in RNA degradation. Increases the RNA binding and the efficiency of RNA degradation. Confers strong poly(A) specificity to the exosome. The protein is Exosome complex component Rrp4 of Aeropyrum pernix (strain ATCC 700893 / DSM 11879 / JCM 9820 / NBRC 100138 / K1).